The chain runs to 1004 residues: Importin subunit beta-5 (1004 aa).

Met1 carries the post-translational modification N-acetylmethionine. Residues 21–100 enclose the Importin N-terminal domain; it reads AETQLLQWCD…REVLLKLCLN (80 aa).

It belongs to the importin beta family. Interacts with NAP1.

The protein resides in the cytoplasm. It localises to the nucleus. The protein localises to the nuclear pore complex. In terms of biological role, required for nuclear protein import and mediates docking of import substrate to distinct nucleoporins. Serves a receptor for nuclear localization signals. Mediates the nuclear import of TATA-binding protein (TBP) and of histones H2A and H2B. The polypeptide is Importin subunit beta-5 (KAP114) (Saccharomyces cerevisiae (strain ATCC 204508 / S288c) (Baker's yeast)).